A 282-amino-acid polypeptide reads, in one-letter code: uncharacterized protein (282 aa).

The region spanning 2-78 (TDVLAVIREM…IKIAVSLAKQ (77 aa)) is the HTH rpiR-type domain. The H-T-H motif DNA-binding region spans 38 to 57 (VNELANACDTSEASIIRFCR). The region spanning 122 to 262 (AAEALANANK…FILVAQKKYN (141 aa)) is the SIS domain.

This is an uncharacterized protein from Caldanaerobacter subterraneus subsp. tengcongensis (strain DSM 15242 / JCM 11007 / NBRC 100824 / MB4) (Thermoanaerobacter tengcongensis).